A 155-amino-acid chain; its full sequence is Large ribosomal subunit protein uL15 (155 aa).

Over residues 1 to 16 (MVRRFKRAVKYRRGSR) the composition is skewed to basic residues. The disordered stretch occupies residues 1–35 (MVRRFKRAVKYRRGSRTHGWGRVGQHRKSGGSGGK).

The protein belongs to the universal ribosomal protein uL15 family. Part of the 50S ribosomal subunit.

Its function is as follows. Binds to the 23S rRNA. This Pyrobaculum arsenaticum (strain DSM 13514 / JCM 11321 / PZ6) protein is Large ribosomal subunit protein uL15.